The chain runs to 195 residues: Calcineurin B homologous protein 1 (195 aa).

The N-myristoyl glycine moiety is linked to residue Gly2. A Necessary for association with microtubule and interaction with GAPDH motif is present at residues 2–6 (GSRAS). EF-hand domains follow at residues 26–61 (SQIT…AINP), 71–106 (FSEG…NGPE), 110–145 (SRSN…MVGV), and 151–186 (QLGS…VDVE). Residues Asp123, Asp125, Asp127, Lys129, and Glu134 each coordinate Ca(2+). Residues 138 to 147 (VLRMMVGVNI) carry the Nuclear export signal 1 motif. Ca(2+) contacts are provided by Asp164, Asp166, Asp168, and Glu175. The Nuclear export signal 2 signature appears at 176–185 (FVKVLEKVDV).

The protein belongs to the calcineurin regulatory subunit family. CHP subfamily. As to quaternary structure, monomer. Interacts with STK17B; the interaction occurs in a calcium-independent manner and induces the translocation of CHP1 from the Golgi to the nucleus. Interacts with GAPDH; the interaction is direct, occurs in a N-myristoylation-dependent manner and facilitates the ability of CHP1 to bind microtubules. Interacts with KIF1B (via the C-terminal end of the kinesin-motor domain); the interaction occurs in a calcium-dependent manner. Associates (via C-terminal domain) with microtubules; the association occurs with polymerized microtubules during the cell cycle in a myristoylation- and calcium-independent manner and is enhanced by GAPDH. Interacts with PPP3CA. Interacts with SLC9A1/NHE1 (via the cytoplasmic C-terminal domain); the interaction occurs at the plasma membrane in a calcium-dependent manner and at a domain that is critical for growth factor stimulation of the exchanger. Interacts with SLC9A3; increases SLC9A3 trafficking and activity at the plasma membrane. Post-translationally, phosphorylated; decreased phosphorylation is associated with an increase in SLC9A1/NHE1 Na(+)/H(+) exchange activity. Phosphorylation occurs in serum-dependent manner. The phosphorylation state may regulate the binding to SLC9A1/NHE1. Both N-myristoylation and calcium-mediated conformational changes are essential for its function in exocytic traffic. N-myristoylation is required for its association with microtubules and interaction with GAPDH, but not for the constitutive association to membranes.

It localises to the nucleus. The protein resides in the cytoplasm. Its subcellular location is the cytoskeleton. It is found in the endomembrane system. The protein localises to the endoplasmic reticulum-Golgi intermediate compartment. It localises to the endoplasmic reticulum. The protein resides in the cell membrane. Its subcellular location is the membrane. Its function is as follows. Calcium-binding protein involved in different processes such as regulation of vesicular trafficking, plasma membrane Na(+)/H(+) exchanger and gene transcription. Involved in the constitutive exocytic membrane traffic. Mediates the association between microtubules and membrane-bound organelles of the endoplasmic reticulum and Golgi apparatus and is also required for the targeting and fusion of transcytotic vesicles (TCV) with the plasma membrane. Functions as an integral cofactor in cell pH regulation by controlling plasma membrane-type Na(+)/H(+) exchange activity. Affects the pH sensitivity of SLC9A1/NHE1 by increasing its sensitivity at acidic pH. Required for the stabilization and localization of SLC9A1/NHE1 at the plasma membranes. Inhibits serum- and GTPase-stimulated Na(+)/H(+) exchange. Plays a role as an inhibitor of ribosomal RNA transcription by repressing the nucleolar UBF1 transcriptional activity. May sequester UBF1 in the nucleoplasm and limit its translocation to the nucleolus. Associates to the ribosomal gene promoter. Acts as a negative regulator of the calcineurin/NFAT signaling pathway. Inhibits NFAT nuclear translocation and transcriptional activity by suppressing the calcium-dependent calcineurin phosphatase activity. Also negatively regulates the kinase activity of the apoptosis-induced kinase STK17B. Inhibits both STK17B auto- and substrate-phosphorylations in a calcium-dependent manner. The polypeptide is Calcineurin B homologous protein 1 (Chp1) (Mus musculus (Mouse)).